A 488-amino-acid polypeptide reads, in one-letter code: Cytochrome P450 71A24 (488 aa).

The helical transmembrane segment at 3–23 (MMMMIILLLCSIILITILFFK) threads the bilayer. Cys433 serves as a coordination point for heme.

The protein belongs to the cytochrome P450 family. The cofactor is heme.

Its subcellular location is the membrane. The sequence is that of Cytochrome P450 71A24 (CYP71A24) from Arabidopsis thaliana (Mouse-ear cress).